A 3313-amino-acid chain; its full sequence is Cadherin EGF LAG seven-pass G-type receptor 3 (3313 aa).

The signal sequence occupies residues 1-31 (MARRPLWWGLPGPSTPLLLLLLFSLFPSSRE). The Extracellular portion of the chain corresponds to 32–2538 (EMGGGGDQGW…RLEGDLELLA (2507 aa)). Disordered stretches follow at residues 148-187 (LPLD…RNGR) and 205-269 (EPGH…RMRS). Residues 258–268 (HESRTAPERMR) are compositionally biased toward basic and acidic residues. 9 Cadherin domains span residues 317–424 (PQYN…APVF), 425–536 (EQAQ…APQF), 537–642 (SEKR…SPIF), 643–747 (VSTP…RPEF), 748–849 (TMKE…RPVF), 850–952 (QSAH…APQF), 953–1058 (VASH…APVF), 1059–1160 (PAEE…SPVL), and 1161–1257 (NNFQ…VVII). N-linked (GlcNAc...) asparagine glycosylation occurs at Asn623. Asn838 carries N-linked (GlcNAc...) asparagine glycosylation. N-linked (GlcNAc...) asparagine glycans are attached at residues Asn1173, Asn1213, Asn1308, and Asn1318. An EGF-like 1; calcium-binding domain is found at 1366–1424 (DDNVCLREPCENYMKCVSVLRFDSSAPFLASASTLFRPIQPIAGLRCRCPPGFTGDFCE). Cystine bridges form between Cys1370-Cys1381, Cys1375-Cys1412, Cys1414-Cys1423, Cys1430-Cys1441, Cys1435-Cys1450, Cys1452-Cys1461, Cys1470-Cys1481, Cys1475-Cys1491, and Cys1493-Cys1504. The 37-residue stretch at 1426-1462 (ELDLCYSNPCRNGGACARREGGYTCVCRPRFTGEDCE) folds into the EGF-like 2; calcium-binding domain. Residues 1466–1505 (EAGRCVPGVCRNGGTCTNAPNGGFRCQCPAGGAFEGPRCE) enclose the EGF-like 3; calcium-binding domain. A Laminin G-like 1 domain is found at 1506–1710 (VAARSFPPSS…VANNGTTAGC (205 aa)). Asn1640 and Asn1704 each carry an N-linked (GlcNAc...) asparagine glycan. Intrachain disulfides connect Cys1684–Cys1710, Cys1717–Cys1728, Cys1722–Cys1737, and Cys1739–Cys1748. Residues 1713 to 1749 (KSHFCASGPCKNGGLCSERWGGFSCDCPVGFGGKDCR) form the EGF-like 4; calcium-binding domain. Residues 1753–1935 (AHPYHFQGNG…SHRINVEPGC (183 aa)) enclose the Laminin G-like 2 domain. The N-linked (GlcNAc...) asparagine glycan is linked to Asn1761. 9 disulfides stabilise this stretch: Cys1906–Cys1935, Cys1941–Cys1952, Cys1946–Cys1961, Cys1963–Cys1972, Cys1976–Cys1987, Cys1981–Cys1999, Cys2001–Cys2010, Cys2018–Cys2031, and Cys2033–Cys2043. One can recognise an EGF-like 5; calcium-binding domain in the interval 1937 to 1972 (VTNPCASGPCPPHANCKDLWQTFSCTCWPGYYGPGC). Asp1954 carries the post-translational modification (3R)-3-hydroxyaspartate. One can recognise an EGF-like 6; calcium-binding domain in the interval 1973 to 2011 (VDACLLNPCQNQGSCRHLQGGPHGYTCDCASGYFGQHCE). The 33-residue stretch at 2012 to 2044 (HRMDQQCPRGWWGSPTCGPCNCDVHKGFDPNCN) folds into the EGF-like 7; calcium-binding domain. Residue Asn2044 is glycosylated (N-linked (GlcNAc...) asparagine). The EGF-like 8; calcium-binding domain maps to 2046 to 2081 (TSGQCHCKEFHYRPRGSDSCLPCDCYPVGSTSRSCA). 5 disulfide bridges follow: Cys2050–Cys2065, Cys2052–Cys2068, Cys2070–Cys2080, Cys2089–Cys2098, and Cys2101–Cys2113. A Laminin EGF-like domain is found at 2068–2115 (CDCYPVGSTSRSCAPHSGQCPCRPGALGRQCNSCDSPFAEVTASGCRV). Residue Tyr2117 is modified to Phosphotyrosine. 5 N-linked (GlcNAc...) asparagine glycosylation sites follow: Asn2173, Asn2192, Asn2382, Asn2472, and Asn2504. The disordered stretch occupies residues 2356-2395 (HTHVLLPSQSPQPSPSEVLPTSSNAENATASGVVSPPAPL). Residues 2364-2528 (QSPQPSPSEV…GVLMDASPRE (165 aa)) form the GAIN-B domain. A compositionally biased stretch (polar residues) spans 2374–2387 (LPTSSNAENATASG). 2 cysteine pairs are disulfide-bonded: Cys2478–Cys2510 and Cys2498–Cys2512. The tract at residues 2478–2528 (CVQWDPPGPADQHGMWTARDCELVHRNGSHARCRCSRTGTFGVLMDASPRE) is GPS. The chain crosses the membrane as a helical span at residues 2539 to 2559 (VFTHVVVAASVTALVLTAAVL). The Cytoplasmic segment spans residues 2560–2570 (LSLRSLKSNVR). The chain crosses the membrane as a helical span at residues 2571–2591 (GIHANVAAALGVAELLFLLGI). The Extracellular portion of the chain corresponds to 2592–2599 (HRTHNQLL). Residues 2600-2620 (CTVVAILLHYFFLSTFAWLLV) traverse the membrane as a helical segment. At 2621-2641 (QGLHLYRMQVEPRNVDRGAMR) the chain is on the cytoplasmic side. The helical transmembrane segment at 2642-2662 (FYHALGWGVPAVLLGLAVGLD) threads the bilayer. Over 2663 to 2679 (PEGYGNPDFCWISIHEP) the chain is Extracellular. The helical transmembrane segment at 2680–2700 (LIWSFAGPIVLVIVMNGIMFL) threads the bilayer. The Cytoplasmic segment spans residues 2701-2724 (LAARTSCSTGQREAKKTSVLRTLR). Residues 2725-2745 (SSFLLLLLVSASWLFGLLAVN) form a helical membrane-spanning segment. Topologically, residues 2746–2752 (HSVLAFH) are extracellular. Residues 2753-2773 (YLHAGLCGLQGLAVLLLFCVL) form a helical membrane-spanning segment. At 2774–3313 (NADARAAWTP…SEVPRSEGHS (540 aa)) the chain is on the cytoplasmic side. Disordered stretches follow at residues 2887-2927 (AGAD…RPLR) and 2977-3004 (SNKD…RAQR). Residues 2889–2899 (ADSDSDSDLSL) show a composition bias toward acidic residues. Over residues 2918 to 2927 (TRGRFQRPLR) the composition is skewed to basic residues. Position 3050 is a phosphotyrosine (Tyr3050). 2 disordered regions span residues 3091-3242 (APVL…PSTE) and 3255-3313 (NSSA…EGHS). Position 3098 is a phosphoserine (Ser3098). A compositionally biased stretch (basic and acidic residues) spans 3102–3119 (SQERLDTAPARLEPRDRG). Low complexity-rich tracts occupy residues 3178 to 3197 (QRPL…SLSR) and 3255 to 3289 (NSSA…PSTP). A compositionally biased stretch (polar residues) spans 3290–3301 (RSATSHSISELS).

The protein belongs to the G-protein coupled receptor 2 family. LN-TM7 subfamily. In terms of processing, the iron and 2-oxoglutarate dependent 3-hydroxylation of aspartate and asparagine is (R) stereospecific within EGF domains. Expressed in the brain. Expressed in cerebellum, olfactory bulb, cerebral cortex, hippocampus and brain stem.

The protein resides in the cell membrane. Functionally, receptor that may have an important role in cell/cell signaling during nervous system formation. The sequence is that of Cadherin EGF LAG seven-pass G-type receptor 3 (Celsr3) from Rattus norvegicus (Rat).